A 146-amino-acid chain; its full sequence is Anti-sigma F factor (146 aa).

Belongs to the anti-sigma-factor family.

The enzyme catalyses L-seryl-[protein] + ATP = O-phospho-L-seryl-[protein] + ADP + H(+). It carries out the reaction L-threonyl-[protein] + ATP = O-phospho-L-threonyl-[protein] + ADP + H(+). In terms of biological role, binds to sigma F and blocks its ability to form an RNA polymerase holoenzyme (E-sigma F). Phosphorylates SpoIIAA on a serine residue. This phosphorylation may enable SpoIIAA to act as an anti-anti-sigma factor that counteracts SpoIIAB and thus releases sigma F from inhibition. The chain is Anti-sigma F factor from Lysinibacillus sphaericus (Bacillus sphaericus).